Reading from the N-terminus, the 270-residue chain is Imidazole glycerol phosphate synthase subunit HisF (270 aa).

Residues Asp11 and Asp130 contribute to the active site.

Belongs to the HisA/HisF family. As to quaternary structure, heterodimer of HisH and HisF.

The protein resides in the cytoplasm. The catalysed reaction is 5-[(5-phospho-1-deoxy-D-ribulos-1-ylimino)methylamino]-1-(5-phospho-beta-D-ribosyl)imidazole-4-carboxamide + L-glutamine = D-erythro-1-(imidazol-4-yl)glycerol 3-phosphate + 5-amino-1-(5-phospho-beta-D-ribosyl)imidazole-4-carboxamide + L-glutamate + H(+). It functions in the pathway amino-acid biosynthesis; L-histidine biosynthesis; L-histidine from 5-phospho-alpha-D-ribose 1-diphosphate: step 5/9. Functionally, IGPS catalyzes the conversion of PRFAR and glutamine to IGP, AICAR and glutamate. The HisF subunit catalyzes the cyclization activity that produces IGP and AICAR from PRFAR using the ammonia provided by the HisH subunit. In Sorangium cellulosum (strain So ce56) (Polyangium cellulosum (strain So ce56)), this protein is Imidazole glycerol phosphate synthase subunit HisF.